The following is a 640-amino-acid chain: Threonine--tRNA ligase (640 aa).

One can recognise a TGS domain in the interval 1–61 (MPIITLPNGD…TEDSTLQIIT (61 aa)). Residues 242 to 533 (DHRKIGKALD…LIEHYAGFMP (292 aa)) form a catalytic region. Residues cysteine 333, histidine 384, and histidine 510 each coordinate Zn(2+).

Belongs to the class-II aminoacyl-tRNA synthetase family. In terms of assembly, homodimer. It depends on Zn(2+) as a cofactor.

The protein localises to the cytoplasm. It catalyses the reaction tRNA(Thr) + L-threonine + ATP = L-threonyl-tRNA(Thr) + AMP + diphosphate + H(+). Functionally, catalyzes the attachment of threonine to tRNA(Thr) in a two-step reaction: L-threonine is first activated by ATP to form Thr-AMP and then transferred to the acceptor end of tRNA(Thr). Also edits incorrectly charged L-seryl-tRNA(Thr). In Acinetobacter baumannii (strain AB307-0294), this protein is Threonine--tRNA ligase.